The following is a 283-amino-acid chain: Phospholipase C (283 aa).

Residues methionine 1–alanine 24 form the signal peptide. The propeptide occupies histidine 25–arginine 38. 9 residues coordinate Zn(2+): tryptophan 39, histidine 52, aspartate 93, histidine 107, histidine 156, aspartate 160, histidine 166, histidine 180, and glutamate 184. The Zn-dependent PLC domain occupies tryptophan 39–arginine 283.

This sequence belongs to the bacterial zinc-metallophospholipase C family. As to quaternary structure, monomer. Requires Zn(2+) as cofactor.

It catalyses the reaction a 1,2-diacyl-sn-glycero-3-phosphocholine + H2O = phosphocholine + a 1,2-diacyl-sn-glycerol + H(+). Its function is as follows. Required, with sphingomyelinase, to effect target cell lysis (hemolysis). This is Phospholipase C (cerA) from Bacillus cereus.